The primary structure comprises 86 residues: Small ribosomal subunit protein uS17 (86 aa).

It belongs to the universal ribosomal protein uS17 family. In terms of assembly, part of the 30S ribosomal subunit.

Its function is as follows. One of the primary rRNA binding proteins, it binds specifically to the 5'-end of 16S ribosomal RNA. In Rhizorhabdus wittichii (strain DSM 6014 / CCUG 31198 / JCM 15750 / NBRC 105917 / EY 4224 / RW1) (Sphingomonas wittichii), this protein is Small ribosomal subunit protein uS17.